The sequence spans 241 residues: Glucosamine-6-phosphate deaminase (241 aa).

The active-site Proton acceptor; for enolization step is the aspartate 67. The active-site For ring-opening step is the asparagine 136. Histidine 138 serves as the catalytic Proton acceptor; for ring-opening step. Glutamate 143 acts as the For ring-opening step in catalysis.

It belongs to the glucosamine/galactosamine-6-phosphate isomerase family. NagB subfamily.

The enzyme catalyses alpha-D-glucosamine 6-phosphate + H2O = beta-D-fructose 6-phosphate + NH4(+). Its pathway is amino-sugar metabolism; N-acetylneuraminate degradation; D-fructose 6-phosphate from N-acetylneuraminate: step 5/5. In terms of biological role, catalyzes the reversible isomerization-deamination of glucosamine 6-phosphate (GlcN6P) to form fructose 6-phosphate (Fru6P) and ammonium ion. The chain is Glucosamine-6-phosphate deaminase from Clostridium tetani (strain Massachusetts / E88).